The chain runs to 557 residues: Dihydroxy-acid dehydratase (557 aa).

A Mg(2+)-binding site is contributed by aspartate 78. Cysteine 119 is a binding site for [2Fe-2S] cluster. Aspartate 120 and lysine 121 together coordinate Mg(2+). The residue at position 121 (lysine 121) is an N6-carboxylysine. Cysteine 192 serves as a coordination point for [2Fe-2S] cluster. Glutamate 442 lines the Mg(2+) pocket. The active-site Proton acceptor is the serine 468.

It belongs to the IlvD/Edd family. In terms of assembly, homodimer. It depends on [2Fe-2S] cluster as a cofactor. Mg(2+) serves as cofactor.

It catalyses the reaction (2R)-2,3-dihydroxy-3-methylbutanoate = 3-methyl-2-oxobutanoate + H2O. It carries out the reaction (2R,3R)-2,3-dihydroxy-3-methylpentanoate = (S)-3-methyl-2-oxopentanoate + H2O. Its pathway is amino-acid biosynthesis; L-isoleucine biosynthesis; L-isoleucine from 2-oxobutanoate: step 3/4. It functions in the pathway amino-acid biosynthesis; L-valine biosynthesis; L-valine from pyruvate: step 3/4. In terms of biological role, functions in the biosynthesis of branched-chain amino acids. Catalyzes the dehydration of (2R,3R)-2,3-dihydroxy-3-methylpentanoate (2,3-dihydroxy-3-methylvalerate) into 2-oxo-3-methylpentanoate (2-oxo-3-methylvalerate) and of (2R)-2,3-dihydroxy-3-methylbutanoate (2,3-dihydroxyisovalerate) into 2-oxo-3-methylbutanoate (2-oxoisovalerate), the penultimate precursor to L-isoleucine and L-valine, respectively. This is Dihydroxy-acid dehydratase from Bacillus cereus (strain 03BB102).